A 275-amino-acid polypeptide reads, in one-letter code: Secreted RxLR effector protein 153 (275 aa).

The first 27 residues, 1–27 (MRNRAFLFGLFFIEYACLVLFAAPTRA), serve as a signal peptide directing secretion. A glycan (N-linked (GlcNAc...) asparagine) is linked at Asn-45. Residues 48–63 (RTLQADDSKRISAEER) carry the RxLR-dEER motif.

The protein belongs to the RxLR effector family.

Its subcellular location is the secreted. It localises to the host cell membrane. Functionally, secreted effector that completely suppresses the host cell death induced by cell death-inducing proteins. This chain is Secreted RxLR effector protein 153, found in Plasmopara viticola (Downy mildew of grapevine).